The following is a 354-amino-acid chain: S-adenosylmethionine:tRNA ribosyltransferase-isomerase (354 aa).

The protein belongs to the QueA family. As to quaternary structure, monomer.

It localises to the cytoplasm. The catalysed reaction is 7-aminomethyl-7-carbaguanosine(34) in tRNA + S-adenosyl-L-methionine = epoxyqueuosine(34) in tRNA + adenine + L-methionine + 2 H(+). The protein operates within tRNA modification; tRNA-queuosine biosynthesis. Its function is as follows. Transfers and isomerizes the ribose moiety from AdoMet to the 7-aminomethyl group of 7-deazaguanine (preQ1-tRNA) to give epoxyqueuosine (oQ-tRNA). This Salmonella gallinarum (strain 287/91 / NCTC 13346) protein is S-adenosylmethionine:tRNA ribosyltransferase-isomerase.